A 407-amino-acid polypeptide reads, in one-letter code: L-amino-acid oxidase (407 aa).

An intrachain disulfide couples cysteine 10 to cysteine 94. The N-linked (GlcNAc...) asparagine glycan is linked to asparagine 93. A substrate-binding site is contributed by histidine 144. Residue valine 182 participates in FAD binding. Cysteine 252 and cysteine 333 are joined by a disulfide. The N-linked (GlcNAc...) asparagine glycan is linked to asparagine 282. Position 293 (tyrosine 293) interacts with substrate. Residues glutamate 378 and 385-390 (GWIDST) each bind FAD. 385–386 (GW) provides a ligand contact to substrate.

Belongs to the flavin monoamine oxidase family. FIG1 subfamily. In terms of assembly, homodimer; non-covalently linked. The cofactor is FAD. As to expression, expressed by the venom gland.

The protein localises to the secreted. The catalysed reaction is an L-alpha-amino acid + O2 + H2O = a 2-oxocarboxylate + H2O2 + NH4(+). It catalyses the reaction L-leucine + O2 + H2O = 4-methyl-2-oxopentanoate + H2O2 + NH4(+). It carries out the reaction L-phenylalanine + O2 + H2O = 3-phenylpyruvate + H2O2 + NH4(+). The enzyme catalyses L-isoleucine + O2 + H2O = (S)-3-methyl-2-oxopentanoate + H2O2 + NH4(+). The catalysed reaction is L-aspartate + O2 + H2O = oxaloacetate + H2O2 + NH4(+). It catalyses the reaction L-lysine + O2 + H2O = 6-amino-2-oxohexanoate + H2O2 + NH4(+). It carries out the reaction L-glutamate + O2 + H2O = H2O2 + 2-oxoglutarate + NH4(+). Functionally, catalyzes an oxidative deamination of predominantly hydrophobic and aromatic L-amino acids, thus producing hydrogen peroxide that may contribute to the diverse toxic effects of this enzyme. Is highly active on L-Leu followed by L-Phe and L-Ile, moderately active on L-Asp, L-Glu, and L-Lys, and not active on L-Pro, L-Asn, L-Gly, L-Ser and L-Cys. Exhibits diverse biological activities such as antibacterial activity (Minimal inhibitory concentrations (MIC) are 9.0 ug/ml against S.aureus, 144.0 ug/ml against P.aeruginosa and 288.0 ug/ml against E.coli) and inhibition of ADP- and TMVA-induced platelet aggregation. Effects of snake L-amino oxidases on platelets are controversial, since they either induce aggregation or inhibit agonist-induced aggregation. These different effects are probably due to different experimental conditions. Unlike other snake venom L-amino acid oxidases, does not induce hemorrhage. This protein may also induce hemolysis, edema, apoptosis and have antiparasitic activities. The sequence is that of L-amino-acid oxidase from Daboia siamensis (Eastern Russel's viper).